Reading from the N-terminus, the 236-residue chain is MEKREELYRGKAKSVYKTDDADRLILLFRNDTSAFDGKRIEQLDRKGMVNNKFNAFIMQKLEEAGVPTQFDKLLGDNECLVKKLDMIPVECVVRNYAAGSLVKRLGVEEGIKLEPSTFELFLKNDEKGDPFINESHVVAFGWGTAEQLAEMKKLSLKVNEVLNKLFDDAGLLLVDFKLEFGVFHGQIVLGDEFSPDGCRLWDKETRKKMDKDRFRQGLGDVIEAYEEVAKRLGVPL.

The protein belongs to the SAICAR synthetase family.

It catalyses the reaction 5-amino-1-(5-phospho-D-ribosyl)imidazole-4-carboxylate + L-aspartate + ATP = (2S)-2-[5-amino-1-(5-phospho-beta-D-ribosyl)imidazole-4-carboxamido]succinate + ADP + phosphate + 2 H(+). The protein operates within purine metabolism; IMP biosynthesis via de novo pathway; 5-amino-1-(5-phospho-D-ribosyl)imidazole-4-carboxamide from 5-amino-1-(5-phospho-D-ribosyl)imidazole-4-carboxylate: step 1/2. This is Phosphoribosylaminoimidazole-succinocarboxamide synthase from Pseudomonas putida (strain W619).